The sequence spans 345 residues: MALISLRQLLDHAGEFGYGVPAFNVNNLEQIHAIMEAAEETDSPVILQASAGARKYAGEAYLRHMVLAAAETHPDIPIVLHQDHGSSPAVCQASIRSGFTSVMMDGSLREDMKTPSDYDYNVDVTRRVCEMAHAVGVSVEGELGCLGSLETGQAGEEDGVGAAGTLSHDMMLTDPAQARDFVARTGVDALAIAIGTSHGAYKFSRKPTGDILAIDRIREIHEQIPDTHLVMHGSSSVPQEWLEIIRQYGGDIKETYGVPVEEILRGIKTGVRKVNIDTDIRLAMTGAIRKSLAEDRSEFDPRKALLAAKKGARSVVKLRFEAFGCAGQASKIKPIAMEQLAQWYR.

Residue serine 50 coordinates D-glyceraldehyde 3-phosphate. Aspartate 83 acts as the Proton donor in catalysis. Positions 84, 105, 142, and 198 each coordinate Zn(2+). Position 199 (glycine 199) interacts with dihydroxyacetone phosphate. Histidine 232 is a Zn(2+) binding site. Residues 233 to 235 (GSS) and 275 to 278 (NIDT) each bind dihydroxyacetone phosphate.

This sequence belongs to the class II fructose-bisphosphate aldolase family. Homodimer. Zn(2+) is required as a cofactor.

It carries out the reaction beta-D-fructose 1,6-bisphosphate = D-glyceraldehyde 3-phosphate + dihydroxyacetone phosphate. It participates in carbohydrate biosynthesis; Calvin cycle. Its pathway is carbohydrate degradation; glycolysis; D-glyceraldehyde 3-phosphate and glycerone phosphate from D-glucose: step 4/4. Its function is as follows. Catalyzes the aldol condensation of dihydroxyacetone phosphate (DHAP or glycerone-phosphate) with glyceraldehyde 3-phosphate (G3P) to form fructose 1,6-bisphosphate (FBP) in gluconeogenesis and the reverse reaction in glycolysis. This chain is Fructose-bisphosphate aldolase, plasmid (cbbAP), found in Cupriavidus necator (strain ATCC 17699 / DSM 428 / KCTC 22496 / NCIMB 10442 / H16 / Stanier 337) (Ralstonia eutropha).